The chain runs to 504 residues: Subtilisin-like protease 1 (504 aa).

Residues 1 to 19 (MGVFRFISISLAAVSAANA) form the signal peptide. A propeptide spanning residues 20 to 116 (AQILSMPHAQ…VEPDTIVSVH (97 aa)) is cleaved from the precursor. The region spanning 34–116 (SYIVMMKDDT…VEPDTIVSVH (83 aa)) is the Inhibitor I9 domain. Positions 126–400 (SWGLARISNP…NVLINNGGAK (275 aa)) constitute a Peptidase S8 domain. Active-site charge relay system residues include Asp158 and His190. The interval 172-198 (AIWGSNQVNDGDDRDGSGHGTHTSGTM) is disordered. N-linked (GlcNAc...) asparagine glycosylation is found at Asn233 and Asn251. The segment covering 282-294 (NDNQDAQSSSPAS) has biased composition (polar residues). The disordered stretch occupies residues 282–312 (NDNQDAQSSSPASEPSVCTVGSSAEDDSRSS). Residue Ser345 is the Charge relay system of the active site. The segment covering 378 to 394 (TSSITDAGPGTPTNVLI) has biased composition (polar residues). Residues 378–483 (TSSITDAGPG…YPGGDNFDFD (106 aa)) form a disordered region. 2 stretches are compositionally biased toward pro residues: residues 405–449 (NPNP…PGQP) and 457–473 (APAPAPMPPTPQHPHTP).

It belongs to the peptidase S8 family.

The protein resides in the secreted. Its function is as follows. Secreted subtilisin-like serine protease with keratinolytic activity that contributes to pathogenicity. The sequence is that of Subtilisin-like protease 1 (SUB1) from Trichophyton rubrum (Athlete's foot fungus).